The chain runs to 314 residues: Short chain dehydrogenase atnD (314 aa).

Leucine 41, lysine 66, aspartate 90, and asparagine 116 together coordinate NADP(+). Catalysis depends on proton donor residues serine 171 and tyrosine 204. Positions 204 and 208 each coordinate NADP(+). Residue lysine 208 is the Lowers pKa of active site Tyr of the active site.

It belongs to the short-chain dehydrogenases/reductases (SDR) family.

It functions in the pathway secondary metabolite biosynthesis. In terms of biological role, short chain dehydrogenase; part of the gene cluster that mediates the biosynthesis of aspercryptins, linear lipopeptides built from six amino acids including 2 highly unusual and nonproteogenic amino acids, 2-amino-octanoic acid (2aoa) and 2-amino-dodecanol (2adol). The core structure of aspercryptins is as follows: Ser/Ala-Thr-Ile/Val-2aoa-Asn-2adol. The first step of aspercryptin biosynthesis is the generation of the fatty acid precursors, octanoic and dodecanoic acids, by the FAS subunits atnF and atnM. The fatty acid precursors are likely transformed into the corresponding alpha-amino fatty acids in three steps. First, they are hydroxylated by the cytochrome P450 monooxygenase atnE, then oxidized to the corresponding alpha-keto acids by the NAD(P)-dependent oxidoreductase atnD, and finally converted to the alpha-amino fatty acids by the PLP-dependent aminotransferases atnH or atnJ. the alpha-amino fatty acids, 2-amino-octanoic and 2-amino-dodecanoic acids, are recognized, activated, and covalently tethered to the NRPS atnA by its fourth and sixth adenylation domains. The second module of atnA is the Thr module and contains an epimerase (E) domain responsible for the epimerization of Thr to D-allo-Thr. Additionally, despite atnA having only one epimerase domain, the first amino acid of aspercryptin A1 is D-Ser, suggesting that serine is either loaded directly as D-Ser on the first module or that the epimerase domain in the threonine module epimerizes both L-Ser and L-Thr. After condensation of the hexapeptide of aspercryptin, the C-terminal reductase (TE) domain might be involved in the reductive release and production of the aldehyde hexapeptide. Further reduction would generate aspercryptins. The variety of aspercryptins produced reflects the flexibility of the atnA NRPS, allowing incorporation of alanine instead of serine, valine for isoleucine, and a C10 fatty amino alcohol instead of the C12 version. AtnB seems to be involved in the selectivity for Ile versus Val by the third module. Moreover, type B, C and D aspercryptins have an additional N-terminal cichorine, acetyl and propionyl group respectively. This Emericella nidulans (strain FGSC A4 / ATCC 38163 / CBS 112.46 / NRRL 194 / M139) (Aspergillus nidulans) protein is Short chain dehydrogenase atnD.